The chain runs to 124 residues: Small ribosomal subunit protein uS12 (124 aa).

A 3-methylthioaspartic acid modification is found at aspartate 89.

It belongs to the universal ribosomal protein uS12 family. Part of the 30S ribosomal subunit. Contacts proteins S8 and S17. May interact with IF1 in the 30S initiation complex.

In terms of biological role, with S4 and S5 plays an important role in translational accuracy. Its function is as follows. Interacts with and stabilizes bases of the 16S rRNA that are involved in tRNA selection in the A site and with the mRNA backbone. Located at the interface of the 30S and 50S subunits, it traverses the body of the 30S subunit contacting proteins on the other side and probably holding the rRNA structure together. The combined cluster of proteins S8, S12 and S17 appears to hold together the shoulder and platform of the 30S subunit. This Acinetobacter baylyi (strain ATCC 33305 / BD413 / ADP1) protein is Small ribosomal subunit protein uS12.